Reading from the N-terminus, the 247-residue chain is RNA-free ribonuclease P (247 aa).

Positions 223 to 247 (SPEGEKEKGEADKKKKSHSEEAEFI) are disordered.

Belongs to the HARP family.

It catalyses the reaction Endonucleolytic cleavage of RNA, removing 5'-extranucleotides from tRNA precursor.. RNA-free RNase P that catalyzes the removal of the 5'-leader sequence from pre-tRNA to produce the mature 5'-terminus. The sequence is that of RNA-free ribonuclease P from Methanosarcina acetivorans (strain ATCC 35395 / DSM 2834 / JCM 12185 / C2A).